A 63-amino-acid chain; its full sequence is Cytochrome c oxidase subunit 7C, mitochondrial (63 aa).

The N-terminal 16 residues, 1 to 16, are a transit peptide targeting the mitochondrion; sequence MLGHSIRRFTTSVVRR. At 17 to 33 the chain is on the mitochondrial matrix side; sequence SHYEEGPGKNLPFSVKN. Lys25 bears the N6-acetyllysine; alternate mark. An N6-succinyllysine; alternate modification is found at Lys25. The helical transmembrane segment at 34–60 threads the bilayer; the sequence is KWALLVKMSLYFGSAFATPFLIVRHQL. The Mitochondrial intermembrane portion of the chain corresponds to 61–63; the sequence is LKQ.

The protein belongs to the cytochrome c oxidase VIIc family. Component of the cytochrome c oxidase (complex IV, CIV), a multisubunit enzyme composed of 14 subunits. The complex is composed of a catalytic core of 3 subunits MT-CO1, MT-CO2 and MT-CO3, encoded in the mitochondrial DNA, and 11 supernumerary subunits COX4I, COX5A, COX5B, COX6A, COX6B, COX6C, COX7A, COX7B, COX7C, COX8 and NDUFA4, which are encoded in the nuclear genome. The complex exists as a monomer or a dimer and forms supercomplexes (SCs) in the inner mitochondrial membrane with NADH-ubiquinone oxidoreductase (complex I, CI) and ubiquinol-cytochrome c oxidoreductase (cytochrome b-c1 complex, complex III, CIII), resulting in different assemblies (supercomplex SCI(1)III(2)IV(1) and megacomplex MCI(2)III(2)IV(2)). Interacts with RAB5IF.

The protein resides in the mitochondrion inner membrane. It participates in energy metabolism; oxidative phosphorylation. Functionally, component of the cytochrome c oxidase, the last enzyme in the mitochondrial electron transport chain which drives oxidative phosphorylation. The respiratory chain contains 3 multisubunit complexes succinate dehydrogenase (complex II, CII), ubiquinol-cytochrome c oxidoreductase (cytochrome b-c1 complex, complex III, CIII) and cytochrome c oxidase (complex IV, CIV), that cooperate to transfer electrons derived from NADH and succinate to molecular oxygen, creating an electrochemical gradient over the inner membrane that drives transmembrane transport and the ATP synthase. Cytochrome c oxidase is the component of the respiratory chain that catalyzes the reduction of oxygen to water. Electrons originating from reduced cytochrome c in the intermembrane space (IMS) are transferred via the dinuclear copper A center (CU(A)) of subunit 2 and heme A of subunit 1 to the active site in subunit 1, a binuclear center (BNC) formed by heme A3 and copper B (CU(B)). The BNC reduces molecular oxygen to 2 water molecules using 4 electrons from cytochrome c in the IMS and 4 protons from the mitochondrial matrix. The chain is Cytochrome c oxidase subunit 7C, mitochondrial (COX7C) from Papio hamadryas (Hamadryas baboon).